The chain runs to 234 residues: Glycerol-3-phosphate acyltransferase (234 aa).

Helical transmembrane passes span 4 to 24 (LLAILVVSYIVGSIPTSLIAG), 56 to 76 (TVTLIDIIKGVVAAVSVVAFF), 90 to 110 (VALRLLAGMSAVIGHVFTVFA), 122 to 142 (AGMLIGIAPVSMLMVIGVFLL), 152 to 172 (VASILAAIAFPLIIAIRKYLF), and 191 to 211 (FHDSLDYHLIIFGLIVAIAII).

Belongs to the PlsY family. Probably interacts with PlsX.

It is found in the cell inner membrane. The catalysed reaction is an acyl phosphate + sn-glycerol 3-phosphate = a 1-acyl-sn-glycero-3-phosphate + phosphate. It participates in lipid metabolism; phospholipid metabolism. Catalyzes the transfer of an acyl group from acyl-phosphate (acyl-PO(4)) to glycerol-3-phosphate (G3P) to form lysophosphatidic acid (LPA). This enzyme utilizes acyl-phosphate as fatty acyl donor, but not acyl-CoA or acyl-ACP. The chain is Glycerol-3-phosphate acyltransferase from Chlorobium chlorochromatii (strain CaD3).